Here is a 210-residue protein sequence, read N- to C-terminus: Dephospho-CoA kinase (210 aa).

The DPCK domain maps to 4–202; the sequence is WVGLTGGIGS…AFYSGIFASK (199 aa). 12 to 17 is an ATP binding site; it reads GSGKSA.

It belongs to the CoaE family.

Its subcellular location is the cytoplasm. The catalysed reaction is 3'-dephospho-CoA + ATP = ADP + CoA + H(+). It participates in cofactor biosynthesis; coenzyme A biosynthesis; CoA from (R)-pantothenate: step 5/5. Its function is as follows. Catalyzes the phosphorylation of the 3'-hydroxyl group of dephosphocoenzyme A to form coenzyme A. The chain is Dephospho-CoA kinase from Neisseria gonorrhoeae (strain ATCC 700825 / FA 1090).